Reading from the N-terminus, the 369-residue chain is Uroporphyrinogen decarboxylase (369 aa).

Substrate is bound by residues R28–R32, D78, Y154, S209, and H339.

Belongs to the uroporphyrinogen decarboxylase family. Homodimer.

The protein localises to the cytoplasm. The enzyme catalyses uroporphyrinogen III + 4 H(+) = coproporphyrinogen III + 4 CO2. Its pathway is porphyrin-containing compound metabolism; protoporphyrin-IX biosynthesis; coproporphyrinogen-III from 5-aminolevulinate: step 4/4. Catalyzes the decarboxylation of four acetate groups of uroporphyrinogen-III to yield coproporphyrinogen-III. This chain is Uroporphyrinogen decarboxylase, found in Polaromonas sp. (strain JS666 / ATCC BAA-500).